The following is a 74-amino-acid chain: Anaphase-promoting complex subunit 13 (74 aa).

A disordered region spans residues 33 to 53 (LNELPEPEQDNGGTTESVKEQ).

This sequence belongs to the APC13 family. In terms of assembly, the mammalian APC/C is composed at least of 14 distinct subunits ANAPC1, ANAPC2, CDC27/APC3, ANAPC4, ANAPC5, CDC16/APC6, ANAPC7, CDC23/APC8, ANAPC10, ANAPC11, CDC26/APC12, ANAPC13, ANAPC15 and ANAPC16 that assemble into a complex of at least 19 chains with a combined molecular mass of around 1.2 MDa; APC/C interacts with FZR1 and FBXO5.

It is found in the nucleus. The protein operates within protein modification; protein ubiquitination. Its function is as follows. Component of the anaphase promoting complex/cyclosome (APC/C), a cell cycle-regulated E3 ubiquitin ligase that controls progression through mitosis and the G1 phase of the cell cycle. The APC/C complex acts by mediating ubiquitination and subsequent degradation of target proteins: it mainly mediates the formation of 'Lys-11'-linked polyubiquitin chains and, to a lower extent, the formation of 'Lys-48'- and 'Lys-63'-linked polyubiquitin chains. The APC/C complex catalyzes assembly of branched 'Lys-11'-/'Lys-48'-linked branched ubiquitin chains on target proteins. The sequence is that of Anaphase-promoting complex subunit 13 (ANAPC13) from Bos taurus (Bovine).